The following is a 376-amino-acid chain: Succinyl-diaminopimelate desuccinylase (376 aa).

His67 contacts Zn(2+). The active site involves Asp69. Asp100 is a binding site for Zn(2+). The active-site Proton acceptor is the Glu134. Glu135, Glu163, and His349 together coordinate Zn(2+).

It belongs to the peptidase M20A family. DapE subfamily. In terms of assembly, homodimer. Requires Zn(2+) as cofactor. The cofactor is Co(2+).

The catalysed reaction is N-succinyl-(2S,6S)-2,6-diaminopimelate + H2O = (2S,6S)-2,6-diaminopimelate + succinate. The protein operates within amino-acid biosynthesis; L-lysine biosynthesis via DAP pathway; LL-2,6-diaminopimelate from (S)-tetrahydrodipicolinate (succinylase route): step 3/3. Catalyzes the hydrolysis of N-succinyl-L,L-diaminopimelic acid (SDAP), forming succinate and LL-2,6-diaminopimelate (DAP), an intermediate involved in the bacterial biosynthesis of lysine and meso-diaminopimelic acid, an essential component of bacterial cell walls. The protein is Succinyl-diaminopimelate desuccinylase of Proteus mirabilis (strain HI4320).